We begin with the raw amino-acid sequence, 840 residues long: MWSGIPIFALLSSIGIAAAETGLDGWLRYASVPCNGNCQRALPSHIVTLNSTRSSPVYVAGQELQDGLHQILGKHASVKSTGCSTDSSIIVGTVEAYRQVCNAGRQVPQLDVDGFWLSIREKSVLIVGQSERGALYGAYEYLSMLAQGNFSQVSYATSPHAPIRWVNQWDNMDGSIERGYGGPSIFFKDGVIRQDLSRVQQYARLLASVRINGIIVNNVNANASLLMPSNMDGLARIADIFRPYGIRVGISLNFASPSTLGNLSTYDPFDSSVIAWWGNVTDQLYARIPDMAGYLVKANSEGQPGPTTYNRTLADGANMFARALKPYGGVVMFRAFVYDHHISEDNWYNDRANAAVDFFKPLDGKFDDNVVVQIKYGPIDFQVREPASPLFANLYKTNTAIELQVTQEYLGQQSHLVYLPPLWQTILGFDLRVDQKPSLVRDIISGQRFDRPLGGWAAVVNVGTNSTWLGSHLAMSNLYAYGRLAWEPTLDSEDIVQDWIRLTFGLDRRIVDTLTQMSMESWPAYENYSGNLGIQTLTDILYTHYGPNPASQDGNGWGQWTRADHLSIGMDRTVKNGTKFSGQYPAEVAAMYENIETTPDNLLLWFHHVNYTQRLHSGKTVIQHFYDAHYTGAETAQTFVSQWESLRERIDAERYQHVLTRLIYQAGHSIVWRDAINNFYHNLSGIADEKQRVGHHPWRVEAEDMQLDGYVPYAVSPFETASNYTAIVTASNGTTGTASATLDFKTGTYDLGINYYDMYGGKSHWTVYLNDRVVGQWQGNSEDVLSHTPSIYLDGHSATRITFRDVKIHKGDRLKIVGKPDGVEPAPLDYVVVLPPGIVD.

Residues 1–19 form the signal peptide; the sequence is MWSGIPIFALLSSIGIAAA. N50, N149, N222, N262, N279, N310, N465, N527, N576, N610, N682, N723, and N732 each carry an N-linked (GlcNAc...) asparagine glycan.

It belongs to the glycosyl hydrolase 67 family.

The protein localises to the secreted. It carries out the reaction an alpha-D-glucuronoside + H2O = D-glucuronate + an alcohol. Alpha-glucuronidase involved in the hydrolysis of xylan, a major structural heterogeneous polysaccharide found in plant biomass representing the second most abundant polysaccharide in the biosphere, after cellulose. Releases 4-O-methylglucuronic acid from xylan. The sequence is that of Probable alpha-glucuronidase A (aguA) from Aspergillus fumigatus (strain CBS 144.89 / FGSC A1163 / CEA10) (Neosartorya fumigata).